We begin with the raw amino-acid sequence, 69 residues long: Cytochrome c oxidase subunit 8A, mitochondrial (69 aa).

The transit peptide at 1–25 (MSVLTSLLLRGLTGSARRLPVPRAK) directs the protein to the mitochondrion. The SIFI-degron motif lies at 2–19 (SVLTSLLLRGLTGSARRL). The Mitochondrial matrix portion of the chain corresponds to 26–36 (VHSMPPEEELG). A helical transmembrane segment spans residues 37 to 60 (TLEKAIALTSCFVSLFLPAGWILS). Topologically, residues 61–69 (HLEDYKRPE) are mitochondrial intermembrane.

This sequence belongs to the cytochrome c oxidase VIII family. In terms of assembly, component of the cytochrome c oxidase (complex IV, CIV), a multisubunit enzyme composed of 14 subunits. The complex is composed of a catalytic core of 3 subunits MT-CO1, MT-CO2 and MT-CO3, encoded in the mitochondrial DNA, and 11 supernumerary subunits COX4I, COX5A, COX5B, COX6A, COX6B, COX6C, COX7A, COX7B, COX7C, COX8 and NDUFA4, which are encoded in the nuclear genome. The complex exists as a monomer or a dimer and forms supercomplexes (SCs) in the inner mitochondrial membrane with NADH-ubiquinone oxidoreductase (complex I, CI) and ubiquinol-cytochrome c oxidoreductase (cytochrome b-c1 complex, complex III, CIII), resulting in different assemblies (supercomplex SCI(1)III(2)IV(1) and megacomplex MCI(2)III(2)IV(2)). In terms of processing, in response to mitochondrial stress, the precursor protein is ubiquitinated by the SIFI complex in the cytoplasm before mitochondrial import, leading to its degradation. Within the SIFI complex, UBR4 initiates ubiquitin chain that are further elongated or branched by KCMF1.

The protein resides in the mitochondrion inner membrane. It participates in energy metabolism; oxidative phosphorylation. Its function is as follows. Component of the cytochrome c oxidase, the last enzyme in the mitochondrial electron transport chain which drives oxidative phosphorylation. The respiratory chain contains 3 multisubunit complexes succinate dehydrogenase (complex II, CII), ubiquinol-cytochrome c oxidoreductase (cytochrome b-c1 complex, complex III, CIII) and cytochrome c oxidase (complex IV, CIV), that cooperate to transfer electrons derived from NADH and succinate to molecular oxygen, creating an electrochemical gradient over the inner membrane that drives transmembrane transport and the ATP synthase. Cytochrome c oxidase is the component of the respiratory chain that catalyzes the reduction of oxygen to water. Electrons originating from reduced cytochrome c in the intermembrane space (IMS) are transferred via the dinuclear copper A center (CU(A)) of subunit 2 and heme A of subunit 1 to the active site in subunit 1, a binuclear center (BNC) formed by heme A3 and copper B (CU(B)). The BNC reduces molecular oxygen to 2 water molecules using 4 electrons from cytochrome c in the IMS and 4 protons from the mitochondrial matrix. This is Cytochrome c oxidase subunit 8A, mitochondrial (COX8A) from Papio anubis (Olive baboon).